The following is a 93-amino-acid chain: Small ribosomal subunit protein uS19 (93 aa).

Belongs to the universal ribosomal protein uS19 family.

In terms of biological role, protein S19 forms a complex with S13 that binds strongly to the 16S ribosomal RNA. This Campylobacter hominis (strain ATCC BAA-381 / DSM 21671 / CCUG 45161 / LMG 19568 / NCTC 13146 / CH001A) protein is Small ribosomal subunit protein uS19.